The chain runs to 243 residues: Alanyl-tRNA editing protein AlaX-M (243 aa).

Zn(2+) contacts are provided by histidine 105, histidine 109, cysteine 208, and histidine 212.

The protein belongs to the class-II aminoacyl-tRNA synthetase family. Editing domain AlaX-M subfamily. Zn(2+) serves as cofactor.

Its subcellular location is the cytoplasm. Functionally, functions in trans to edit the amino acid moiety from incorrectly charged Ser-tRNA(Ala) or Gly-tRNA(Ala). Has no activity on incorrectly charged Ser-tRNA(Thr), nor on correctly charged Ala-tRNA(Ala) or Ser-tRNA(Ser). In Methanosarcina barkeri (strain Fusaro / DSM 804), this protein is Alanyl-tRNA editing protein AlaX-M (alaXM).